The primary structure comprises 632 residues: Acyl-coenzyme A oxidase-like protein (632 aa).

376 to 381 is a binding site for FAD; sequence TGGMGY.

The protein belongs to the acyl-CoA oxidase family. Requires FAD as cofactor.

The polypeptide is Acyl-coenzyme A oxidase-like protein (Acoxl) (Mus musculus (Mouse)).